Reading from the N-terminus, the 446-residue chain is Signal recognition particle 54 kDa protein (446 aa).

GTP contacts are provided by residues 104–111, 184–188, and 242–245; these read GLQGSGKT, DTAGR, and TKMD.

This sequence belongs to the GTP-binding SRP family. SRP54 subfamily. As to quaternary structure, part of the signal recognition particle protein translocation system, which is composed of SRP and FtsY. Archaeal SRP consists of a 7S RNA molecule of 300 nucleotides and two protein subunits: SRP54 and SRP19.

It is found in the cytoplasm. The catalysed reaction is GTP + H2O = GDP + phosphate + H(+). Functionally, involved in targeting and insertion of nascent membrane proteins into the cytoplasmic membrane. Binds to the hydrophobic signal sequence of the ribosome-nascent chain (RNC) as it emerges from the ribosomes. The SRP-RNC complex is then targeted to the cytoplasmic membrane where it interacts with the SRP receptor FtsY. The chain is Signal recognition particle 54 kDa protein from Methanocorpusculum labreanum (strain ATCC 43576 / DSM 4855 / Z).